We begin with the raw amino-acid sequence, 329 residues long: tRNA (guanine(10)-N2)-dimethyltransferase (329 aa).

Residues 40–143 (NVENVEIFER…KLWIGIRIRE (104 aa)) enclose the THUMP domain.

The protein belongs to the methyltransferase superfamily. Trm-G10 family. As to quaternary structure, monomer.

Its subcellular location is the cytoplasm. The catalysed reaction is guanosine(10) in tRNA + 2 S-adenosyl-L-methionine = N(2)-dimethylguanosine(10) in tRNA + 2 S-adenosyl-L-homocysteine + 2 H(+). Functionally, catalyzes the adenosylmethionine-dependent methylation of the exocyclic amino group (N(2)) of guanosine at position 10 of various tRNAs. Acts via a two-step process that leads to the formation of either N(2)-monomethyl (m(2)G) or N(2)-dimethylguanosine (m(2)(2)G). The protein is tRNA (guanine(10)-N2)-dimethyltransferase (trmG10) of Pyrococcus abyssi (strain GE5 / Orsay).